Consider the following 163-residue polypeptide: Phosphopantetheine adenylyltransferase (163 aa).

ATP-binding residues include Ser-10 and His-18. Ser-10 serves as a coordination point for substrate. Residues Lys-42, Thr-75, and Arg-89 each coordinate substrate. ATP contacts are provided by residues 90–92 (GIR), Glu-100, and 125–131 (YAHVSSS).

This sequence belongs to the bacterial CoaD family. In terms of assembly, homohexamer. The cofactor is Mg(2+).

Its subcellular location is the cytoplasm. It catalyses the reaction (R)-4'-phosphopantetheine + ATP + H(+) = 3'-dephospho-CoA + diphosphate. The protein operates within cofactor biosynthesis; coenzyme A biosynthesis; CoA from (R)-pantothenate: step 4/5. Reversibly transfers an adenylyl group from ATP to 4'-phosphopantetheine, yielding dephospho-CoA (dPCoA) and pyrophosphate. This chain is Phosphopantetheine adenylyltransferase, found in Enterococcus faecalis (strain ATCC 700802 / V583).